Here is a 472-residue protein sequence, read N- to C-terminus: MVPMNPELMHYPNQPHMMPGYPMINAYQQSYLQNPAQWTPEMLLCMQMQMQQMVPGTATNSTYMPPQSKNTVTPNATSPLSQISDRDSGNDTISPPLTSQNSATTPNYHNQPQMQLTPLQQAKPEKEEISPYAINNILSSTQSSPDNGNEADDKENSSVRRNTFPASSASTKKPRGTPYDRTNTPMTVVPQMPQFAPDFSNYNLTMNAWSEFFKKDRCMVCGDNSTGYHYGVQSCEGCKGFFRRSVHKNIAYVCTKGENCTFSYENCAANRGVRTRCQACRFAKCLAVGMNRDNVRVNKETDKDVKPSVASPNFEMTSQVKELTAAFVANMPCSTHLTSGTHAIGAIKKFIESVPALSSLLPKDEKALEMSIQKVMSGILAIRAAFTFDPITFYSCENPVNLLRGGIRNTVFNDCEVALLSGIHILQIVNGGVAEIFTSYCQGLRHQLSQTHLQEIGLCDRLLMRLGPYLNQ.

Polar residues-rich tracts occupy residues 57–83 (TATN…LSQI), 90–112 (NDTI…HNQP), 138–147 (LSSTQSSPDN), and 159–171 (VRRN…SAST). 2 disordered regions span residues 57-112 (TATN…HNQP) and 138-184 (LSST…RTNT). Residues 215–297 (KDRCMVCGDN…VGMNRDNVRV (83 aa)) constitute a DNA-binding region (nuclear receptor). NR C4-type zinc fingers lie at residues 218–238 (CMVC…CEGC) and 267–285 (CAAN…FAKC).

The protein belongs to the nuclear hormone receptor family.

It localises to the nucleus. In terms of biological role, orphan nuclear receptor. This Caenorhabditis elegans protein is Nuclear hormone receptor family member nhr-2 (nhr-2).